Reading from the N-terminus, the 405-residue chain is Growth/differentiation factor 11 (405 aa).

The signal sequence occupies residues M1–A24. Positions A25–R296 are excised as a propeptide. N92 is a glycosylation site (N-linked (GlcNAc...) asparagine). 4 disulfides stabilise this stretch: C302/C312, C311/C370, C339/C402, and C343/C404.

The protein belongs to the TGF-beta family. Homodimer; disulfide-linked. Interacts directly with ACVR2B. Interacts directly with ACVR2A. Interacts with ACVR1B, TGFBR1 and ACVR1C in an ACVR2B-dependent manner. Interacts with FST isoform 2/FS288. In terms of processing, synthesized as large precursor molecule that undergoes proteolytic cleavage by furin-like proteases. This produces an inactive form consisting of the mature C-terminal portion non-covalently bound to its cleaved N-terminal propeptide. Activation of the mature form requires additional cleavage of the propeptide by a tolloid-like metalloproteinase.

Its subcellular location is the secreted. In terms of biological role, secreted signal that acts globally to regulate anterior/posterior axial patterning during development. May play critical roles in patterning both mesodermal and neural tissues. It is required for proper vertebral patterning and orofacial development. Signals through activin receptors type-2, ACVR2A and ACVR2B, and activin receptors type-1, ACVR1B, ACVR1C and TGFBR1 leading to the phosphorylation of SMAD2 and SMAD3. The protein is Growth/differentiation factor 11 (Gdf11) of Rattus norvegicus (Rat).